We begin with the raw amino-acid sequence, 311 residues long: Pyrimidine-specific ribonucleoside hydrolase RihA (311 aa).

The active site involves His240.

Belongs to the IUNH family. RihA subfamily.

Functionally, hydrolyzes with equal efficiency cytidine or uridine to ribose and cytosine or uracil, respectively. The sequence is that of Pyrimidine-specific ribonucleoside hydrolase RihA from Escherichia coli O8 (strain IAI1).